Reading from the N-terminus, the 1200-residue chain is ATP-dependent helicase/deoxyribonuclease subunit B (1200 aa).

The protein belongs to the helicase family. AddB/RexB type 2 subfamily. As to quaternary structure, heterodimer of AddA and RexB. Mg(2+) serves as cofactor.

Its function is as follows. The heterodimer acts as both an ATP-dependent DNA helicase and an ATP-dependent, dual-direction single-stranded exonuclease. Recognizes the chi site generating a DNA molecule suitable for the initiation of homologous recombination. This subunit has 5' -&gt; 3' nuclease activity but not helicase activity. The protein is ATP-dependent helicase/deoxyribonuclease subunit B of Lactiplantibacillus plantarum (strain ATCC BAA-793 / NCIMB 8826 / WCFS1) (Lactobacillus plantarum).